The primary structure comprises 759 residues: MPVKVYAEEMEGESMKKKKLSETPLPKIKKRKMKNGDTEDLDLEHMAESVNGEINNNNPTPKLKKKKKPAPISDLSETAEECDGEQPDPSTPTPKKVKKKKIKESKEDSDTQEEAEQSEPQTNGVKSVKKSKKNITSDDNEPAPKKRKTDTTEITTAKECEEKVLTKEEQDINQEKIDGDFSKFPLSKETIKNLQAKGVSYLFPIQSKTFHTAYSGKDVVVQARTGTGKTFSFAIPLVEKLNEDQQPLARGRAPRVIILTPTRELAIQITNEIRSITKKLKVSCFYGGTPYQQQVFAIKDGIDFLVGTPGRVRDLVQNYRLDLTTLKHVVLDEVDMMFDMGFSEQVEEILSVRYKADPEENPQTLLFSATCPDWMYNMAKKYMRKQFEKIDLIGHRSQKAATTVEHLAIECTRSQKAAVLGDLVQVYSGSHGKTIIFCDSKLEAHTLATSCGSLKQSAKSLHGDLQQKEREVVLKGFRQGTFEVLIATNVAARGLDIPEVDLVVLYSAPKEADAYVHRSGRTGRAGRTGVCISLYEPWERHYLRNVERSTGITFKRVGVPSLLNVAKSSSADAIKSLDTVPADVIEHFKEYAQELIEQKGALTAIAAALAHISGATSIKQRSLLNMEAGCDTITLKSSVPIHSLSYAWQSIKEQLGDDVDSKIHRMCLLKDSMGVCFDVRSENLESMQERWTDTKQWQFTVATELPAIQESERNFDGPRNRGFGGRGRRPFDRRNNSRNSNRGGGGRGRNRNGGFRRGR.

The segment at 1 to 154 (MPVKVYAEEM…KKRKTDTTEI (154 aa)) is disordered. A compositionally biased stretch (acidic residues) spans 77–86 (ETAEECDGEQ). The short motif at 179–207 (GDFSKFPLSKETIKNLQAKGVSYLFPIQS) is the Q motif element. The Helicase ATP-binding domain maps to 210–389 (FHTAYSGKDV…KKYMRKQFEK (180 aa)). 223–230 (ARTGTGKT) is a binding site for ATP. The short motif at 332-335 (DEVD) is the DEAD box element. One can recognise a Helicase C-terminal domain in the interval 422-566 (DLVQVYSGSH…VGVPSLLNVA (145 aa)). The segment at 709-759 (QESERNFDGPRNRGFGGRGRRPFDRRNNSRNSNRGGGGRGRNRNGGFRRGR) is disordered. Residues 710–719 (ESERNFDGPR) show a composition bias toward basic and acidic residues. Basic residues predominate over residues 748–759 (GRNRNGGFRRGR).

It belongs to the DEAD box helicase family. DDX21/DDX50 subfamily. Widely expressed. Expressed at higher level in stomach. Expressed at higher level compared to ddx21-b.

Its subcellular location is the nucleus. It localises to the nucleolus. It is found in the nucleoplasm. The protein resides in the cytoplasm. The protein localises to the cytosol. Its subcellular location is the mitochondrion. The enzyme catalyses ATP + H2O = ADP + phosphate + H(+). Its function is as follows. RNA helicase that acts as a sensor of the transcriptional status of both RNA polymerase (Pol) I and II: promotes ribosomal RNA (rRNA) processing and transcription from polymerase II (Pol II). Binds various RNAs, such as rRNAs, snoRNAs, 7SK and, at lower extent, mRNAs. In the nucleolus, localizes to rDNA locus, where it directly binds rRNAs and snoRNAs, and promotes rRNA transcription, processing and modification. Required for rRNA 2'-O-methylation, possibly by promoting the recruitment of late-acting snoRNAs SNORD56 and SNORD58 with pre-ribosomal complexes. In the nucleoplasm, binds 7SK RNA and is recruited to the promoters of Pol II-transcribed genes: acts by facilitating the release of P-TEFb from inhibitory 7SK snRNP in a manner that is dependent on its helicase activity, thereby promoting transcription of its target genes. Required to prevent R-loop-associated DNA damage and transcription-associated genomic instability. The polypeptide is Nucleolar RNA helicase 2-A (ddx21-a) (Xenopus laevis (African clawed frog)).